Here is a 417-residue protein sequence, read N- to C-terminus: Candidapepsin-4 (417 aa).

Positions methionine 1–alanine 18 are cleaved as a signal peptide. Positions alanine 19–arginine 75 are cleaved as a propeptide — activation peptide. The region spanning tyrosine 89 to alanine 403 is the Peptidase A1 domain. Residue aspartate 107 is part of the active site. Cysteine 122 and cysteine 134 are disulfide-bonded. N-linked (GlcNAc...) asparagine glycosylation is present at asparagine 137. Residue aspartate 293 is part of the active site. Cysteine 331 and cysteine 369 are disulfide-bonded.

It belongs to the peptidase A1 family. In terms of processing, O-glycosylated.

Its subcellular location is the secreted. It carries out the reaction Preferential cleavage at the carboxyl of hydrophobic amino acids, but fails to cleave 15-Leu-|-Tyr-16, 16-Tyr-|-Leu-17 and 24-Phe-|-Phe-25 of insulin B chain. Activates trypsinogen, and degrades keratin.. This Candida albicans (strain WO-1) (Yeast) protein is Candidapepsin-4 (SAP4).